Reading from the N-terminus, the 142-residue chain is MKKEELKKKLSPLAYRVTQENGTEAPFTNEFDDFFEKGLYVDIVSGEPLFTSLDKYQSGCGWPAFTQPIDKKMVKEKRDKSLFMERTEVRSSNADSHLGHVFTDGPLDKGGLRYCINSAALRFIPFDQLESEGYGDYIKYFS.

Residues 3–126 (KEELKKKLSP…NSAALRFIPF (124 aa)) form the MsrB domain. Cysteine 115 serves as the catalytic Nucleophile.

Belongs to the MsrB Met sulfoxide reductase family.

The catalysed reaction is L-methionyl-[protein] + [thioredoxin]-disulfide + H2O = L-methionyl-(R)-S-oxide-[protein] + [thioredoxin]-dithiol. The polypeptide is Peptide methionine sulfoxide reductase MsrB (Lactococcus lactis subsp. cremoris (strain SK11)).